A 36-amino-acid chain; its full sequence is IACAPRGLLCFRDKECCKGLTCKGRFVNTWPTFCLV.

Cystine bridges form between Cys-3/Cys-17, Cys-10/Cys-22, and Cys-16/Cys-34.

In terms of tissue distribution, expressed by the venom gland.

It localises to the secreted. Functionally, neurotoxin. Causes spastic paralysis and death in mice. Moderate inhibitor of L-type calcium channels (Cav1/CACNA1). The chain is U4-ctenitoxin-Pr1a from Phoneutria reidyi (Brazilian Amazonian armed spider).